Reading from the N-terminus, the 117-residue chain is Large ribosomal subunit protein uL18 (117 aa).

This sequence belongs to the universal ribosomal protein uL18 family. Part of the 50S ribosomal subunit; part of the 5S rRNA/L5/L18/L25 subcomplex. Contacts the 5S and 23S rRNAs.

In terms of biological role, this is one of the proteins that bind and probably mediate the attachment of the 5S RNA into the large ribosomal subunit, where it forms part of the central protuberance. The polypeptide is Large ribosomal subunit protein uL18 (Vibrio cholerae serotype O1 (strain ATCC 39541 / Classical Ogawa 395 / O395)).